The primary structure comprises 81 residues: ATP synthase subunit c, chloroplastic (81 aa).

The next 2 membrane-spanning stretches (helical) occupy residues 3–23 and 57–77; these read PLIS…ASIG and LAFM…LLFA.

This sequence belongs to the ATPase C chain family. F-type ATPases have 2 components, F(1) - the catalytic core - and F(0) - the membrane proton channel. F(1) has five subunits: alpha(3), beta(3), gamma(1), delta(1), epsilon(1). F(0) has four main subunits: a(1), b(1), b'(1) and c(10-14). The alpha and beta chains form an alternating ring which encloses part of the gamma chain. F(1) is attached to F(0) by a central stalk formed by the gamma and epsilon chains, while a peripheral stalk is formed by the delta, b and b' chains.

Its subcellular location is the plastid. It localises to the chloroplast thylakoid membrane. Its function is as follows. F(1)F(0) ATP synthase produces ATP from ADP in the presence of a proton or sodium gradient. F-type ATPases consist of two structural domains, F(1) containing the extramembraneous catalytic core and F(0) containing the membrane proton channel, linked together by a central stalk and a peripheral stalk. During catalysis, ATP synthesis in the catalytic domain of F(1) is coupled via a rotary mechanism of the central stalk subunits to proton translocation. In terms of biological role, key component of the F(0) channel; it plays a direct role in translocation across the membrane. A homomeric c-ring of between 10-14 subunits forms the central stalk rotor element with the F(1) delta and epsilon subunits. This chain is ATP synthase subunit c, chloroplastic, found in Acorus calamus var. americanus (American sweet flag).